Here is a 689-residue protein sequence, read N- to C-terminus: Armadillo-like helical domain-containing protein 3 (689 aa).

The helical transmembrane segment at 520–538 threads the bilayer; it reads IFTLALMIVNLFNMFITYG.

Belongs to the ARMH3 family. In terms of assembly, interacts with PI4KB. Interacts with GBF1.

Its subcellular location is the golgi apparatus membrane. The protein localises to the cytoplasm. Functionally, involved in GBF1 recruitment, Golgi maintenance and protein secretion. The chain is Armadillo-like helical domain-containing protein 3 from Homo sapiens (Human).